The primary structure comprises 926 residues: MILHKSVFKSYIYVLTYFVFFSVMSCENSSVLQEAKHLTISEGFKNPLGFYDAKPTFSWELPVVEGVISQSAYQIVVASSPDLLPNNPDLWDSNKQSSSQSVWINYEGKPLVSRQKVFWQVKYWNQDDKASNWSPVQNFELGLLNNSDWKAKWIGLPTKEEGVLGSQDNIIHRPQYLRKVFELSNDVANARLYITAKGVFDVAINGEDVSDDVMPPGYTPYKKRIETITYDVTDLIESGQNTIGVEVAAGWHSGRLGWMKSYWSDTESPKILCQLEVTMKDGSKASIISDDTWKATTQGPIRISEIYDGETYDAHLEMPHWTTNSFDDKNWKAVQAFPVTSTIKLEPKRHTTVKSKIVLESKEIILKADAAIFDLQQNMVGVPLLKVPMKMGDTLKIRFAEMLSPDGTFYTDNYRSAQSTDYYIAAKEGTIEWMPKFTFHGFRYVELSGFDASKTPSKNWVKGVVQYSNFNENGSFTSSHEKLNQLQSNIVWGLRGNFFDIPTDCPQRDERMGWTGDAQVFGPTSMFNADVYKFWASWMQSVRESQYDNGGIPFVVPDVLHNGKVSSGWGDVCTIIPWKIYYRTGDVGILEENYDMMKKWVAHHQATSKDFISHMNSFADWLQPYPENGNNKGDTSHSLIGTAFFAHSAKLTAKTAEVLGKKEEQATYEALYKSVAKAFENAFFKNGKVKDVTATQTSYLLALAFDLLSEENKENAKQQLLEKISEADNHLRTGFLGTPLLSEVLDETGEIDLMYKLLFNETYPSWFYSINQGATTIWERWNSYSKAEGFNPMKMNSLNHYAYGAIGEWMYERITGIAPLQAGYKIISIAPIPKAPLTSASATLNTPYGEVASSWEIKNETLFLEVVVPPNTTAEIEIPTDNSESLKVDNENFTNGKNLKLIKNEKRKIKILAQPGTYEFQAKYSL.

Residues 1-25 (MILHKSVFKSYIYVLTYFVFFSVMS) form the signal peptide. The N-palmitoyl cysteine moiety is linked to residue C26. C26 carries the S-diacylglycerol cysteine lipid modification. Alpha-L-rhamnose contacts are provided by residues D504, 508-510 (RDE), D517, and W569. Catalysis depends on E510, which acts as the Proton donor. The active-site Proton acceptor is E779. Residue H800 participates in alpha-L-rhamnose binding.

Belongs to the glycosyl hydrolase 78 family.

The protein localises to the cell membrane. It carries out the reaction Hydrolysis of terminal non-reducing alpha-L-rhamnose residues in alpha-L-rhamnosides.. Functionally, alpha-L-rhamnosidase involved in ulvan degradation. Ulvan is the main polysaccharide component of the Ulvales (green seaweed) cell wall. It is composed of disaccharide building blocks comprising 3-sulfated rhamnose (Rha3S) linked to D-glucuronic acid (GlcA), L-iduronic acid (IduA), or D-xylose (Xyl). Alpha-L-rhamnosidase converts Rha-Xyl-Rha3S, the product of a sulfatase acting on Rha3S-Xyl-Rha3S oligosaccharides, to Rha and Xyl-Rha3S. The enzyme is able to degrade p-nitrophenyl-alpha-L-rhamnopyranoside (PNP-Rha) in vitro. This Formosa agariphila (strain DSM 15362 / KCTC 12365 / LMG 23005 / KMM 3901 / M-2Alg 35-1) protein is Alpha-L-rhamnosidase.